A 543-amino-acid chain; its full sequence is MKRTRSALPANFDPVYPYDAPKPSTQPPFFNDRKGLTESSPGTLAVNISPPLTFSNLGAIKLSTGAGLILKEGKLEANIGPGLTTNQEGQITVEKDSDGLTFTSPLHKIENTVSLSIGEGLEDESGTLKVNFPSPPPPLLFSPPLAEAGGTVSLPLQESMQVTEGKLGVKPTTYSPPLQKTDQQVSLRVGPGLTVLNGQLQAVQPPATTYKEPLLETENSVSLKVGAGLAVQDGALVATPPNVTFSAPLEKNGNAVSVRVGAGLSIQGNALVATTSPTLTFAYPLIKNNNHITLSAGSGLRVSGGSLTVATGPGLSHINGTIAAVIGAGLKFENNAILAKLGNGLTIRDGAIEAVAPQPSFTPVTLWTGPDPNVNTSINGTPVIRSFISLTRDSNLVTVNASFTGEGSYQSVSPTQSQFSLILEFNQFGQLMSTGNLNSTTTWGEKPWGNNTVQVQPSHTWKLCMPNREVYSTPAATLTSCGLNSIAHDGAPNRSIDCMLIINKLAGAATYTLTFRFLNFNKLSSSTVFKTDVLTFTYVGENQ.

A disordered region spans residues 1-36 (MKRTRSALPANFDPVYPYDAPKPSTQPPFFNDRKGL).

This sequence belongs to the adenoviridae fiber family. As to quaternary structure, homotrimer. Interacts (via N-terminal tail region) with pentons.

Its subcellular location is the virion. It is found in the host nucleus. Functionally, forms spikes that protrude from each vertex of the icosahedral capsid. Interacts with host receptor to provide virion initial attachment to target cell. Fiber proteins are shed during virus entry, when virus is still at the cell surface. This Canine adenovirus serotype 1 (strain RI261) (CAdV-1) protein is Fiber protein.